The chain runs to 514 residues: 1,25-dihydroxyvitamin D(3) 24-hydroxylase, mitochondrial (514 aa).

Residues 1-35 constitute a mitochondrion transit peptide; sequence MSCPIDKRRPLIAFLRRLRDLGQPPRSVTSKAHVK. Cysteine 462 lines the heme pocket.

The protein belongs to the cytochrome P450 family. Requires heme as cofactor.

The protein resides in the mitochondrion. It catalyses the reaction calcitriol + 2 reduced [adrenodoxin] + O2 + 2 H(+) = calcitetrol + 2 oxidized [adrenodoxin] + H2O. It carries out the reaction calcitetrol + 2 reduced [adrenodoxin] + O2 + 2 H(+) = (1S)-1,25-dihydroxy-24-oxocalciol + 2 oxidized [adrenodoxin] + 2 H2O. The enzyme catalyses (1S)-1,25-dihydroxy-24-oxocalciol + 2 reduced [adrenodoxin] + O2 + 2 H(+) = (1S)-1,23,25-trihydroxy-24-oxocalciol + 2 oxidized [adrenodoxin] + H2O. The catalysed reaction is (1S)-1,23-dihydroxy-24,25,26,27-tetranorcalciol + 2 reduced [adrenodoxin] + O2 + 2 H(+) = (1S)-1-hydroxy-23-oxo-24,25,26,27-tetranorcalciol + 2 oxidized [adrenodoxin] + 2 H2O. It catalyses the reaction (1S)-1-hydroxy-23-oxo-24,25,26,27-tetranorcalciol + 2 reduced [adrenodoxin] + O2 + H(+) = calcitroate + 2 oxidized [adrenodoxin] + H2O. It carries out the reaction calcidiol + 2 reduced [adrenodoxin] + O2 + 2 H(+) = secalciferol + 2 oxidized [adrenodoxin] + H2O. The enzyme catalyses secalciferol + 2 reduced [adrenodoxin] + O2 + 2 H(+) = 25-hydroxy-24-oxocalciol + 2 oxidized [adrenodoxin] + 2 H2O. The catalysed reaction is 25-hydroxy-24-oxocalciol + 2 reduced [adrenodoxin] + O2 + 2 H(+) = 23S,25-dihydroxy-24-oxocholecalciferol + 2 oxidized [adrenodoxin] + H2O. It catalyses the reaction 20S,23-dihydroxycholecalciferol + 2 reduced [adrenodoxin] + O2 + 2 H(+) = 20S,23,25-trihydroxycholecalciferol + 2 oxidized [adrenodoxin] + H2O. It carries out the reaction 20S,23-dihydroxycholecalciferol + 2 reduced [adrenodoxin] + O2 + 2 H(+) = 20S,23,24-trihydroxycholecalciferol + 2 oxidized [adrenodoxin] + H2O. The enzyme catalyses 20S-hydroxycholecalciferol + 2 reduced [adrenodoxin] + O2 + 2 H(+) = 20S,25-dihydroxycholecalciferol + 2 oxidized [adrenodoxin] + H2O. The catalysed reaction is 20S-hydroxycholecalciferol + 2 reduced [adrenodoxin] + O2 + 2 H(+) = 20S,24S-dihydroxycholecalciferol + 2 oxidized [adrenodoxin] + H2O. It catalyses the reaction 20S-hydroxycholecalciferol + 2 reduced [adrenodoxin] + O2 + 2 H(+) = 20S,24R-dihydroxycholecalciferol + 2 oxidized [adrenodoxin] + H2O. In terms of biological role, a cytochrome P450 monooxygenase with a key role in vitamin D catabolism and calcium homeostasis. Via C24-oxidation pathway, catalyzes the inactivation of both the vitamin D precursor calcidiol (25-hydroxyvitamin D(3)) and the active hormone calcitriol (1-alpha,25-dihydroxyvitamin D(3)). With initial hydroxylation at C-24 (via C24-oxidation pathway), performs a sequential 6-step oxidation of calcitriol leading to the formation of the biliary metabolite calcitroic acid. Hydroxylates at C-24 or C-25 other vitamin D active metabolites, such as CYP11A1-derived secosteroids 20S-hydroxycholecalciferol and 20S,23-dihydroxycholecalciferol. Mechanistically, uses molecular oxygen inserting one oxygen atom into a substrate, and reducing the second into a water molecule, with two electrons provided by NADPH via FDXR/adrenodoxin reductase and FDX1/adrenodoxin. The sequence is that of 1,25-dihydroxyvitamin D(3) 24-hydroxylase, mitochondrial from Mus musculus (Mouse).